Reading from the N-terminus, the 451-residue chain is Trigger factor (451 aa).

Positions 165 to 250 (DDKLTIDFEG…LHQIQVREAL (86 aa)) constitute a PPIase FKBP-type domain.

The protein belongs to the FKBP-type PPIase family. Tig subfamily.

The protein localises to the cytoplasm. It carries out the reaction [protein]-peptidylproline (omega=180) = [protein]-peptidylproline (omega=0). Involved in protein export. Acts as a chaperone by maintaining the newly synthesized protein in an open conformation. Functions as a peptidyl-prolyl cis-trans isomerase. The chain is Trigger factor from Helicobacter pylori (strain P12).